Consider the following 420-residue polypeptide: Multiple sugar-binding protein (420 aa).

The first 22 residues, 1–22, serve as a signal peptide directing secretion; sequence MKWYKKIGLLGIVGLTSVLLAA. Residue Cys-23 is the site of N-palmitoyl cysteine attachment. Cys-23 carries the S-diacylglycerol cysteine lipid modification.

The protein belongs to the bacterial solute-binding protein 1 family.

The protein resides in the cell membrane. Its function is as follows. Involved in a binding protein-dependent transport system responsible for the uptake of melibiose, raffinose and isomaltotriose. This chain is Multiple sugar-binding protein, found in Streptococcus mutans serotype c (strain ATCC 700610 / UA159).